A 251-amino-acid polypeptide reads, in one-letter code: Cell division protein ZapD (251 aa).

This sequence belongs to the ZapD family. In terms of assembly, interacts with FtsZ.

The protein resides in the cytoplasm. In terms of biological role, cell division factor that enhances FtsZ-ring assembly. Directly interacts with FtsZ and promotes bundling of FtsZ protofilaments, with a reduction in FtsZ GTPase activity. The sequence is that of Cell division protein ZapD from Burkholderia ambifaria (strain MC40-6).